Here is a 787-residue protein sequence, read N- to C-terminus: Lysine-specific demethylase JMJ13 (787 aa).

One can recognise a JmjN domain in the interval Cys-103–Pro-144. The region spanning Ser-250 to Ala-420 is the JmjC domain. Fe cation is bound by residues His-293, Glu-295, and His-388. Zn(2+)-binding residues include Cys-500, Cys-503, Cys-514, Cys-516, His-519, Cys-522, His-525, and Cys-534. The C4HCHC zinc-finger motif lies at Cys-500 to Ala-551. The segment at Cys-500 to Ala-551 adopts a C5HC2 zinc-finger fold. An FYR N-terminal domain is found at Val-617–Glu-675. Residues Leu-677–Thr-756 enclose the FYR C-terminal domain. The segment at Glu-712–Ile-769 is disordered. The short motif at Asn-752–Gln-759 is the Nuclear localization signal element.

It belongs to the JARID1 histone demethylase family. The cofactor is Fe(2+). Mostly expressed in leaves, and, to a lower extent, in inflorescences, roots, siliques and stems.

Its subcellular location is the nucleus. The enzyme catalyses N(6),N(6),N(6)-trimethyl-L-lysyl(27)-[histone H3] + 2-oxoglutarate + O2 = N(6),N(6)-dimethyl-L-lysyl(27)-[histone H3] + formaldehyde + succinate + CO2. Functionally, histone demethylase that demethylates 'Lys-27' (H3K27me) of histone H3 with a specific activity for H3K27me3 and involved in the regulation of gene expression. Acts as a temperature and photoperiod dependent flowering repressor. In Arabidopsis thaliana (Mouse-ear cress), this protein is Lysine-specific demethylase JMJ13.